We begin with the raw amino-acid sequence, 186 residues long: Peptide deformylase (186 aa).

Fe cation is bound by residues Cys-113 and His-157. Residue Glu-158 is part of the active site. Fe cation is bound at residue His-161.

Belongs to the polypeptide deformylase family. Fe(2+) serves as cofactor.

The catalysed reaction is N-terminal N-formyl-L-methionyl-[peptide] + H2O = N-terminal L-methionyl-[peptide] + formate. In terms of biological role, removes the formyl group from the N-terminal Met of newly synthesized proteins. Requires at least a dipeptide for an efficient rate of reaction. N-terminal L-methionine is a prerequisite for activity but the enzyme has broad specificity at other positions. This chain is Peptide deformylase, found in Malacoplasma penetrans (strain HF-2) (Mycoplasma penetrans).